Here is a 265-residue protein sequence, read N- to C-terminus: Arcelin-2 (265 aa).

Positions 1–21 are cleaved as a signal peptide; the sequence is MASSNLLTLALFLVLLTHANS. N-linked (GlcNAc...) asparagine glycans are attached at residues N33 and N89. C165 and C201 form a disulfide bridge.

Belongs to the leguminous lectin family.

Its function is as follows. Seed storage. This carbohydrate-binding lectin has toxic effects on bean bruchid pests. Antibiosis properties of legume lectins are proposed to be due to the lysis of epithelial cells of the intestine by binding to the carbohydrate moieties of these proteins. This chain is Arcelin-2 (ARC2), found in Phaseolus vulgaris (Kidney bean).